A 260-amino-acid chain; its full sequence is Putative [LysW]-aminoadipate/[LysW]-glutamate kinase (260 aa).

Substrate contacts are provided by residues 35–36 (GG), Arg62, and Asn162.

The protein belongs to the acetylglutamate kinase family. LysZ subfamily.

The protein localises to the cytoplasm. The enzyme catalyses [amino-group carrier protein]-C-terminal-N-(1,4-dicarboxybutan-1-yl)-L-glutamine + ATP = [amino-group carrier protein]-C-terminal-N-(1-carboxy-5-phosphooxy-5-oxopentan-1-yl)-L-glutamine + ADP. It carries out the reaction [amino-group carrier protein]-C-terminal-gamma-(L-glutamyl)-L-glutamate + ATP = [amino-group carrier protein]-C-terminal-gamma-(5-phospho-L-glutamyl)-L-glutamate + ADP. It functions in the pathway amino-acid biosynthesis; L-lysine biosynthesis via AAA pathway; L-lysine from L-alpha-aminoadipate (Thermus route): step 2/5. It participates in amino-acid biosynthesis; L-arginine biosynthesis. Its function is as follows. Involved in both the arginine and lysine biosynthetic pathways. Phosphorylates the LysW-bound precursors glutamate (for arginine biosynthesis), respectively alpha-aminoadipate (for lysine biosynthesis). This is Putative [LysW]-aminoadipate/[LysW]-glutamate kinase from Pyrobaculum neutrophilum (strain DSM 2338 / JCM 9278 / NBRC 100436 / V24Sta) (Thermoproteus neutrophilus).